Consider the following 695-residue polypeptide: ATP-dependent permease MDL1, mitochondrial (695 aa).

Residues 1 to 100 constitute a mitochondrion transit peptide; it reads MIVRMIRLCK…RLFVLSKPES (100 aa). Transmembrane regions (helical) follow at residues 103 to 123, 156 to 176, 242 to 262, 337 to 357, and 372 to 392; these read IGLA…VPSV, FTAL…RIII, FVGF…MMIL, GLFF…LLLV, and LSSF…LSSF. Positions 103-398 constitute an ABC transmembrane type-1 domain; that stretch reads IGLALLLILI…LSSFYSELMK (296 aa). Positions 432 to 673 constitute an ABC transporter domain; sequence IVFKNVSFTY…PNSELNALLA (242 aa). 467-474 contributes to the ATP binding site; sequence GPSGSGKS.

Belongs to the ABC transporter superfamily. ABCB family. Mitochondrial peptide exporter (TC 3.A.1.212) subfamily.

It localises to the mitochondrion inner membrane. Functionally, mediates export of peptides with molecular masses of 2100 to 600 daltons generated upon proteolysis of mitochondrial inner membrane proteins. This Saccharomyces cerevisiae (strain ATCC 204508 / S288c) (Baker's yeast) protein is ATP-dependent permease MDL1, mitochondrial (MDL1).